Consider the following 330-residue polypeptide: tRNA uridine(34) hydroxylase (330 aa).

Residues 123 to 217 enclose the Rhodanese domain; sequence SDPEVILVDT…YLEEVKQEES (95 aa). Catalysis depends on cysteine 177, which acts as the Cysteine persulfide intermediate.

The protein belongs to the TrhO family.

It catalyses the reaction uridine(34) in tRNA + AH2 + O2 = 5-hydroxyuridine(34) in tRNA + A + H2O. Catalyzes oxygen-dependent 5-hydroxyuridine (ho5U) modification at position 34 in tRNAs. The sequence is that of tRNA uridine(34) hydroxylase from Shewanella sp. (strain MR-4).